We begin with the raw amino-acid sequence, 456 residues long: Histidine--tRNA ligase (456 aa).

A disordered region spans residues 1-20 (MTQSENVAAAGGAKTEPKVR).

It belongs to the class-II aminoacyl-tRNA synthetase family. As to quaternary structure, homodimer.

It is found in the cytoplasm. It carries out the reaction tRNA(His) + L-histidine + ATP = L-histidyl-tRNA(His) + AMP + diphosphate + H(+). The protein is Histidine--tRNA ligase of Cupriavidus necator (strain ATCC 17699 / DSM 428 / KCTC 22496 / NCIMB 10442 / H16 / Stanier 337) (Ralstonia eutropha).